The primary structure comprises 517 residues: MFARDSGRGHRHGRDRQAAVVPAPAGRARFTGDAPAVAVVGGGIAGIAAATLLAERGVRVTLYEREPGLGGRLSGWPTELTDGTTVTMSRGFHAFFRQYYNLRGLLRRVDPDLGSLTRLPDYPLWHGSGLRDSFARVPRTPPLSAMGFVALSPTFGLRDLVRINPRAAVGLLDVRVPEVYERLDGISATDFLDRIRFPEAAHHLAFEVFSRSFFADPRELSAAELALMFHIYFLGSSEGLLFDVPGEPFPAALWEPLHHYLEVHRVDVRTRTPLRQVRPRPGGGLDLTTDDRTTRYDALVLALDSGALRRLVAASPELGDTDWRARIARLRTAPPFLVSRLWLDRPVAHDRPGFLGTSGYGPLDNVSVLDRWEGEAARWARRTRGSVVELHAYAVAPDADRSAVQDEALRQLHRVYPETRSARLLDARHEWRADCPMFPVGGYRDRPGVRSPDPAVTVAGDMVRTELPVALMERAATSGFLAANALLERWGVRGQTLWTVPRAGRSAVLRRLAALAD.

Residues 1 to 24 form a disordered region; sequence MFARDSGRGHRHGRDRQAAVVPAP. Residues A45, 64–65, R72, Y99, D461, and M472 each bind FAD; that span reads ER.

This sequence belongs to the carotenoid/retinoid oxidoreductase family. It depends on FAD as a cofactor.

It catalyses the reaction a carotenoid beta-end derivative + 2 A = a carotenoid phi-end derivative + 2 AH2. Its pathway is carotenoid biosynthesis. Involved in the biosynthesis of isorenieratene, a carotenoid with aromatic end groups. Catalyzes the introduction of two additional double bonds into each ionone ring of beta-carotene to produce isorenieratene. The reaction includes an intramolecular methyl transfer from position C1 to position C2 of the ring. In Streptomyces griseus, this protein is Carotenoid phi-ring synthase.